A 1194-amino-acid polypeptide reads, in one-letter code: Rho-associated protein kinase let-502 (1194 aa).

The region spanning phenylalanine 68 to phenylalanine 330 is the Protein kinase domain. Residues isoleucine 74–valine 82 and lysine 97 contribute to the ATP site. The active-site Proton acceptor is aspartate 190. One can recognise an AGC-kinase C-terminal domain in the interval lysine 331–leucine 402. Coiled coils occupy residues glutamate 436 to arginine 844 and glycine 875 to glutamine 933. In terms of domain architecture, RhoBD spans glutamate 784–proline 846. The PH domain maps to isoleucine 961–serine 1171. Residues arginine 1085 to cysteine 1138 form a Phorbol-ester/DAG-type zinc finger.

It belongs to the protein kinase superfamily. AGC Ser/Thr protein kinase family. Interacts with rho-1. Mg(2+) serves as cofactor.

It localises to the cytoplasm. Its subcellular location is the cytoskeleton. The protein localises to the cleavage furrow. The enzyme catalyses L-seryl-[protein] + ATP = O-phospho-L-seryl-[protein] + ADP + H(+). The catalysed reaction is L-threonyl-[protein] + ATP = O-phospho-L-threonyl-[protein] + ADP + H(+). Activated by rho-1 binding. In terms of biological role, negatively regulates mel-11 to relieve the inhibition of mlc-4, allowing contraction of the circumferentially oriented microfilaments in epidermal cells and thereby regulating myosin II contractility during spermathecal contraction, cleavage furrow contraction in early embryos, and embryonic elongation and morphogenesis. Required for P-cell migration. May also play a role in oocyte cellularization. In Caenorhabditis briggsae, this protein is Rho-associated protein kinase let-502.